The chain runs to 442 residues: Probable D-serine dehydratase (442 aa).

The residue at position 115 (K115) is an N6-(pyridoxal phosphate)lysine.

The protein belongs to the serine/threonine dehydratase family. DsdA subfamily. The cofactor is pyridoxal 5'-phosphate.

The enzyme catalyses D-serine = pyruvate + NH4(+). The polypeptide is Probable D-serine dehydratase (Halalkalibacterium halodurans (strain ATCC BAA-125 / DSM 18197 / FERM 7344 / JCM 9153 / C-125) (Bacillus halodurans)).